We begin with the raw amino-acid sequence, 356 residues long: NADH-quinone oxidoreductase subunit H (356 aa).

8 helical membrane passes run 18-38, 87-107, 120-140, 166-186, 202-222, 257-277, 292-312, and 333-353; these read IVMV…IAYI, GVFL…WAVI, VGIL…IMGG, IGFV…SAIV, WLTF…VFYV, LFML…AILF, WVPG…LIAM, and FLPL…FAGI.

It belongs to the complex I subunit 1 family. NDH-1 is composed of 14 different subunits. Subunits NuoA, H, J, K, L, M, N constitute the membrane sector of the complex.

It localises to the cell inner membrane. It catalyses the reaction a quinone + NADH + 5 H(+)(in) = a quinol + NAD(+) + 4 H(+)(out). NDH-1 shuttles electrons from NADH, via FMN and iron-sulfur (Fe-S) centers, to quinones in the respiratory chain. The immediate electron acceptor for the enzyme in this species is believed to be ubiquinone. Couples the redox reaction to proton translocation (for every two electrons transferred, four hydrogen ions are translocated across the cytoplasmic membrane), and thus conserves the redox energy in a proton gradient. This subunit may bind ubiquinone. The sequence is that of NADH-quinone oxidoreductase subunit H from Nitrobacter winogradskyi (strain ATCC 25391 / DSM 10237 / CIP 104748 / NCIMB 11846 / Nb-255).